Reading from the N-terminus, the 365-residue chain is tRNA-specific 2-thiouridylase MnmA (365 aa).

ATP is bound by residues 6 to 13 and L32; that span reads AMSGGVDS. C101 (nucleophile) is an active-site residue. An intrachain disulfide couples C101 to C199. ATP is bound at residue G125. The interval 149-151 is interaction with tRNA; the sequence is KDQ. The active-site Cysteine persulfide intermediate is C199.

Belongs to the MnmA/TRMU family.

The protein localises to the cytoplasm. The enzyme catalyses S-sulfanyl-L-cysteinyl-[protein] + uridine(34) in tRNA + AH2 + ATP = 2-thiouridine(34) in tRNA + L-cysteinyl-[protein] + A + AMP + diphosphate + H(+). In terms of biological role, catalyzes the 2-thiolation of uridine at the wobble position (U34) of tRNA, leading to the formation of s(2)U34. This chain is tRNA-specific 2-thiouridylase MnmA, found in Corynebacterium efficiens (strain DSM 44549 / YS-314 / AJ 12310 / JCM 11189 / NBRC 100395).